We begin with the raw amino-acid sequence, 597 residues long: Medium/long-chain-fatty-acid--CoA ligase FadD6 (597 aa).

This sequence belongs to the ATP-dependent AMP-binding enzyme family.

It catalyses the reaction a medium-chain fatty acid + ATP + CoA = a medium-chain fatty acyl-CoA + AMP + diphosphate. The catalysed reaction is a long-chain fatty acid + ATP + CoA = a long-chain fatty acyl-CoA + AMP + diphosphate. The enzyme catalyses hexanoate + ATP + CoA = hexanoyl-CoA + AMP + diphosphate. It carries out the reaction octanoate + ATP + CoA = octanoyl-CoA + AMP + diphosphate. It catalyses the reaction decanoate + ATP + CoA = decanoyl-CoA + AMP + diphosphate. The catalysed reaction is dodecanoate + ATP + CoA = dodecanoyl-CoA + AMP + diphosphate. The enzyme catalyses tetradecanoate + ATP + CoA = tetradecanoyl-CoA + AMP + diphosphate. It carries out the reaction hexadecanoate + ATP + CoA = hexadecanoyl-CoA + AMP + diphosphate. It catalyses the reaction octadecanoate + ATP + CoA = octadecanoyl-CoA + AMP + diphosphate. The catalysed reaction is 9-decenoate + ATP + CoA = 9-decenoyl-CoA + AMP + diphosphate. The enzyme catalyses (9Z)-octadecenoate + ATP + CoA = (9Z)-octadecenoyl-CoA + AMP + diphosphate. It carries out the reaction 2-hydroxyhexadecanoate + ATP + CoA = 2-hydroxyhexadecanoyl-CoA + AMP + diphosphate. It catalyses the reaction 3-hydroxytetradecanoate + ATP + CoA = 3-hydroxytetradecanoyl-CoA + AMP + diphosphate. The catalysed reaction is 12-hydroxyoctadecanoate + ATP + CoA = 12-hydroxyoctadecanoyl-CoA + AMP + diphosphate. The enzyme catalyses 15-hydroxypentadecanoate + ATP + CoA = 15-hydroxypentadecanoyl-CoA + AMP + diphosphate. It carries out the reaction 16-hydroxyhexadecanoate + ATP + CoA = 16-hydroxyhexadecanoyl-CoA + AMP + diphosphate. It catalyses the reaction 2-methylhexadecanoate + ATP + CoA = 2-methylhexadecanoyl-CoA + AMP + diphosphate. The catalysed reaction is 3-methylundecanoate + ATP + CoA = 3-methylundecanoyl-CoA + AMP + diphosphate. The enzyme catalyses 12-methyltridecanoate + ATP + CoA = 12-methyltridecanoyl-CoA + AMP + diphosphate. It carries out the reaction 12-methyloctadecanoate + ATP + CoA = 12-methyloctadecanoyl-CoA + AMP + diphosphate. Its function is as follows. Catalyzes the activation of medium/long-chain fatty acids as acyl-coenzyme A (acyl-CoA). May play a role in the uptake of fatty acids by trapping them metabolically as CoA esters. May also play an important role in the channeling of fatty acids into triacylglycerol (TAG) for use by Mycobacterium during its dormancy. This chain is Medium/long-chain-fatty-acid--CoA ligase FadD6, found in Mycobacterium tuberculosis (strain ATCC 25618 / H37Rv).